We begin with the raw amino-acid sequence, 332 residues long: Torsin-1A (332 aa).

An N-terminal signal peptide occupies residues 1 to 20 (MKLGRAALGLLLLAPSVVQA). Positions 91–251 (KPKKPLTLSL…VSVFNNKNSG (161 aa)) are interaction with SNAPIN. 102-109 (GWTGTGKN) serves as a coordination point for ATP. Residues Asn143 and Asn158 are each glycosylated (N-linked (GlcNAc...) asparagine). The tract at residues 251–332 (GFWHSSLIDR…FTKLDYYYDD (82 aa)) is interaction with KLC1. The interaction with SYNE3 stretch occupies residues 312-332 (RVFSDKGCKTVFTKLDYYYDD).

Belongs to the ClpA/ClpB family. Torsin subfamily. In terms of assembly, homohexamer. Interacts with TOR1B; the interaction may be specific of neural tissues. Interacts (ATP-bound) with TOR1AIP1 and TOR1AIP2; the interactions induce ATPase activity. Interacts with KLHL14; preferentially when ATP-free. Interacts with KLC1 (via TPR repeats); the interaction associates TOR1A with the kinesin oligomeric complex. Interacts with COPS4; the interaction associates TOR1A with the CSN complex. Interacts with SNAPIN; the interaction is direct and associates SNAPIN with the CSN complex. Interacts with STON2. Interacts (ATP-bound) with SYNE3 (via KASH domain); the interaction is required for SYNE3 nuclear envelope localization. Interacts with VIM; the interaction associates TOR1A with the cytoskeleton. Interacts with PLEC. Interacts (ATP-bound) with SLC6A3; regulates SLC6A3 transport to the plasma membrane. N-glycosylated.

It is found in the endoplasmic reticulum lumen. The protein resides in the nucleus membrane. It localises to the cell projection. Its subcellular location is the growth cone. The protein localises to the cytoplasmic vesicle membrane. It is found in the cytoplasmic vesicle. The protein resides in the secretory vesicle. It localises to the synaptic vesicle. Its subcellular location is the cytoplasm. The protein localises to the cytoskeleton. It carries out the reaction ATP + H2O = ADP + phosphate + H(+). In terms of biological role, protein with chaperone functions important for the control of protein folding, processing, stability and localization as well as for the reduction of misfolded protein aggregates. Involved in the regulation of synaptic vesicle recycling, controls STON2 protein stability in collaboration with the COP9 signalosome complex (CSN). In the nucleus, may link the cytoskeleton with the nuclear envelope, this mechanism seems to be crucial for the control of nuclear polarity, cell movement and, specifically in neurons, nuclear envelope integrity. Participates in the cellular trafficking and may regulate the subcellular location of multipass membrane proteins such as the dopamine transporter SLC6A3, leading to the modulation of dopamine neurotransmission. In the endoplasmic reticulum, plays a role in the quality control of protein folding by increasing clearance of misfolded proteins such as SGCE variants or holding them in an intermediate state for proper refolding. May have a redundant function with TOR1B in non-neural tissues. This Macaca fascicularis (Crab-eating macaque) protein is Torsin-1A (TOR1A).